We begin with the raw amino-acid sequence, 533 residues long: Retinoid isomerohydrolase (533 aa).

N-acetylserine is present on Ser-2. Cys-112 is lipidated: S-palmitoyl cysteine; in membrane form. Residue His-180 participates in Fe cation binding. Residue Cys-231 is the site of S-palmitoyl cysteine; in membrane form attachment. Residues His-241 and His-313 each contribute to the Fe cation site. 2 S-palmitoyl cysteine; in membrane form lipidation sites follow: Cys-329 and Cys-330. His-527 serves as a coordination point for Fe cation.

Belongs to the carotenoid oxygenase family. Requires Fe(2+) as cofactor. Post-translationally, palmitoylation by LRAT regulates ligand binding specificity; the palmitoylated form (membrane form) specifically binds all-trans-retinyl-palmitate, while the soluble unpalmitoylated form binds all-trans-retinol (vitamin A). As to expression, retinal pigment epithelium specific.

It localises to the cell membrane. The enzyme catalyses an all-trans-retinyl ester + H2O = 11-cis-retinol + a fatty acid + H(+). It carries out the reaction lutein = (3R,3'S)-zeaxanthin. The catalysed reaction is all-trans-retinyl hexadecanoate + H2O = 11-cis-retinol + hexadecanoate + H(+). In terms of biological role, critical isomerohydrolase in the retinoid cycle involved in regeneration of 11-cis-retinal, the chromophore of rod and cone opsins. Catalyzes the cleavage and isomerization of all-trans-retinyl fatty acid esters to 11-cis-retinol which is further oxidized by 11-cis retinol dehydrogenase to 11-cis-retinal for use as visual chromophore. Essential for the production of 11-cis retinal for both rod and cone photoreceptors. Also capable of catalyzing the isomerization of lutein to meso-zeaxanthin an eye-specific carotenoid. The soluble form binds vitamin A (all-trans-retinol), making it available for LRAT processing to all-trans-retinyl ester. The membrane form, palmitoylated by LRAT, binds all-trans-retinyl esters, making them available for IMH (isomerohydrolase) processing to all-cis-retinol. The soluble form is regenerated by transferring its palmitoyl groups onto 11-cis-retinol, a reaction catalyzed by LRAT. This chain is Retinoid isomerohydrolase (RPE65), found in Cynops pyrrhogaster (Japanese fire-bellied newt).